The primary structure comprises 1744 residues: Retrotransposon-like protein 1 (1744 aa).

Disordered stretches follow at residues 1–416 (MIEP…SPEE), 823–859 (READ…DQSG), and 1287–1439 (SSET…EVPS). The span at 19 to 30 (SSKQMESSEGSS) shows a compositional bias: low complexity. Residues 31-40 (NTVEETPGSS) show a composition bias toward polar residues. Low complexity predominate over residues 41–80 (GAQAGAQAGAQAEAQAETQVEAQAEAQAEAQVEAQVEAQA). A compositionally biased stretch (polar residues) spans 269–318 (DGSNQESSDGSNHELSNGSNHESSFGSNPESSDVSNLESSGGSNQESSDG). The segment covering 332 to 361 (SDNSNQELSDNSNQESSDSSNQSSDISNQE) has biased composition (low complexity). Acidic residues-rich tracts occupy residues 385–407 (SDQD…GEEE), 837–846 (GSDDLSESEP), and 1291–1437 (EDKE…DEEV). 2 helical membrane-spanning segments follow: residues 1473–1493 (FFRG…LVML) and 1520–1540 (LILD…AQLL).

In terms of tissue distribution, expressed in placenta and in various tissues in late-fetal stage.

Its subcellular location is the membrane. Plays an essential role in capillaries endothelial cells for the maintenance of feto-maternal interface and for development of the placenta. In Mus musculus (Mouse), this protein is Retrotransposon-like protein 1 (Rtl1).